Consider the following 449-residue polypeptide: UDP-N-acetylmuramoylalanine--D-glutamate ligase (449 aa).

118–124 serves as a coordination point for ATP; it reads GTNGKTT.

The protein belongs to the MurCDEF family.

It localises to the cytoplasm. It carries out the reaction UDP-N-acetyl-alpha-D-muramoyl-L-alanine + D-glutamate + ATP = UDP-N-acetyl-alpha-D-muramoyl-L-alanyl-D-glutamate + ADP + phosphate + H(+). Its pathway is cell wall biogenesis; peptidoglycan biosynthesis. Its function is as follows. Cell wall formation. Catalyzes the addition of glutamate to the nucleotide precursor UDP-N-acetylmuramoyl-L-alanine (UMA). This Staphylococcus aureus (strain Mu3 / ATCC 700698) protein is UDP-N-acetylmuramoylalanine--D-glutamate ligase.